The primary structure comprises 477 residues: Aspartyl/glutamyl-tRNA(Asn/Gln) amidotransferase subunit B (477 aa).

The protein belongs to the GatB/GatE family. GatB subfamily. As to quaternary structure, heterotrimer of A, B and C subunits.

It carries out the reaction L-glutamyl-tRNA(Gln) + L-glutamine + ATP + H2O = L-glutaminyl-tRNA(Gln) + L-glutamate + ADP + phosphate + H(+). The catalysed reaction is L-aspartyl-tRNA(Asn) + L-glutamine + ATP + H2O = L-asparaginyl-tRNA(Asn) + L-glutamate + ADP + phosphate + 2 H(+). In terms of biological role, allows the formation of correctly charged Asn-tRNA(Asn) or Gln-tRNA(Gln) through the transamidation of misacylated Asp-tRNA(Asn) or Glu-tRNA(Gln) in organisms which lack either or both of asparaginyl-tRNA or glutaminyl-tRNA synthetases. The reaction takes place in the presence of glutamine and ATP through an activated phospho-Asp-tRNA(Asn) or phospho-Glu-tRNA(Gln). In Lactococcus lactis subsp. cremoris (strain SK11), this protein is Aspartyl/glutamyl-tRNA(Asn/Gln) amidotransferase subunit B.